Reading from the N-terminus, the 1783-residue chain is Collagen alpha-1(XXVII) chain A (1783 aa).

The N-terminal stretch at 1 to 35 (MNLATRRRVRRTSRLVAKRALLLCILLYCTSFGFT) is a signal peptide. In terms of domain architecture, Laminin G-like spans 73–235 (TTRARVTTPT…NICSAIRRQC (163 aa)). Disordered stretches follow at residues 288 to 312 (SSSV…LALM), 327 to 524 (HKPS…PRTP), 553 to 744 (VGAP…APGP), 772 to 1461 (PGNM…GDIG), and 1512 to 1546 (GNPG…LPGP). Low complexity predominate over residues 403–415 (KPTSVPKPNPTKN). Over residues 436–447 (LPAPKPTVPKRP) the composition is skewed to pro residues. Polar residues predominate over residues 462-494 (HTTPLTPKSTLAPNSTSKKPLPTLKSTSFTTAA). The interval 553–1547 (VGAPGLKGDQ…RGPPGLPGPP (995 aa)) is triple-helical region. The Collagen-like 1 domain occupies 554–608 (GAPGLKGDQGESGLPGPPGKPGQPGMRGPRGPPGPHGKPGRPGPTGLKGKKGDPG). 5 stretches are compositionally biased toward low complexity: residues 622–633 (VGLPGPVGLVGV), 651–661 (EPGEQGPVGEA), 735–744 (EPGVIGAPGP), 817–829 (PGPQ…IGPS), and 861–870 (ARGLPGPRGA). 2 consecutive Collagen-like domains span residues 818 to 873 (GPQG…AAGR) and 845 to 902 (GKPG…GALG). Residues 926 to 935 (GFIGPGGEAG) are compositionally biased toward gly residues. Residues 967–976 (GGPPGPPGSP) are compositionally biased toward pro residues. 2 stretches are compositionally biased toward low complexity: residues 978 to 988 (SPGSRGPIGIR) and 1098 to 1129 (SIGL…AGPD). In terms of domain architecture, Collagen-like 4 spans 986-1043 (GIRGPKGRRGPRGPDGVPGEIGTEGKKGPDGPPGKIGFPGHAGKIGESGEVGPKGFPG). Basic and acidic residues-rich tracts occupy residues 1131-1158 (TKGE…KDGP), 1170-1182 (PEGK…ERGK), and 1257-1267 (AKGEQGDDGKV). Residues 1269–1326 (GPTGAPGLRGPVGKRGDRGEPGDPGYVGQQGVDGLRGKPGAPGLPGDPGPRGTQGPKG) enclose the Collagen-like 5 domain. Composition is skewed to low complexity over residues 1334–1349 (KGKQ…RGSP) and 1396–1409 (LPGK…VGVI). Collagen-like domains follow at residues 1446–1503 (GPQG…GLAG) and 1497–1549 (GRGG…PPGI). Over residues 1537–1546 (PRGPPGLPGP) the composition is skewed to pro residues. Residues 1551 to 1783 (LAMNQDFGLG…HLEVGPVCFL (233 aa)) constitute a propeptide, C-terminal propeptide. A Fibrillar collagen NC1 domain is found at 1589–1783 (PEILRTLDYL…HLEVGPVCFL (195 aa)). 3 cysteine pairs are disulfide-bonded: C1619-C1651, C1660-C1781, and C1696-C1734. The Ca(2+) site is built by D1637, N1639, C1642, and D1645. Residue N1698 is glycosylated (N-linked (GlcNAc...) asparagine).

The protein belongs to the fibrillar collagen family. As to expression, expressed dynamically in the notochord from late epiboly, spreading to the anterior notochord by 24 hpf, and then throughout the notochord by 30 hpf. Subsequently, notochordal expression becomes restricted to the distal tip of the tail by 48 hpf and is no longer detectable by 72 hpf. Also expressed throughout the floor plate and hypochord at 24 hpf, and in forming head cartilages and the first forming tooth.

The protein resides in the secreted. It localises to the extracellular space. It is found in the extracellular matrix. Its function is as follows. May play a role during the calcification of cartilage and the transition of cartilage to bone. Together with col27a1b, plays a role in development of the notochord and axial skeleton. In Danio rerio (Zebrafish), this protein is Collagen alpha-1(XXVII) chain A.